Consider the following 347-residue polypeptide: uncharacterized protein (347 aa).

This is an uncharacterized protein from Saccharomyces cerevisiae (strain ATCC 204508 / S288c) (Baker's yeast).